Consider the following 129-residue polypeptide: MKTLQFFFLFCCWKAICCNSCELTNITIAIEKEECRFCISINTTWCAGYCYTRDLVYKDPARPKIQKTCTFKELVYETVRVPGCAHHADSLYTYPVATQCHCGKCDSDSTDCTVRGLGPSYCSFGEMKE.

Positions Met1 to Cys18 are cleaved as a signal peptide. Cystine bridges form between Cys21-Cys69, Cys35-Cys84, Cys38-Cys122, Cys46-Cys100, Cys50-Cys102, and Cys105-Cys112. N-linked (GlcNAc...) asparagine glycans are attached at residues Asn25 and Asn42.

The protein belongs to the glycoprotein hormones subunit beta family. As to quaternary structure, heterodimer. The active follitropin is a heterodimer composed of an alpha chain/CGA shared with other hormones and a unique beta chain/FSHB shown here.

It localises to the secreted. Together with the alpha chain CGA constitutes follitropin, the follicle-stimulating hormone, and provides its biological specificity to the hormone heterodimer. Binds FSHR, a G protein-coupled receptor, on target cells to activate downstream signaling pathways. Follitropin is involved in follicle development and spermatogenesis in reproductive organs. The sequence is that of Follitropin subunit beta (FSHB) from Homo sapiens (Human).